Reading from the N-terminus, the 365-residue chain is Succinyl-diaminopimelate desuccinylase (365 aa).

His65 lines the Zn(2+) pocket. Asp67 is a catalytic residue. Asp96 serves as a coordination point for Zn(2+). Glu126 (proton acceptor) is an active-site residue. Zn(2+)-binding residues include Glu127, Glu155, and His340.

The protein belongs to the peptidase M20A family. DapE subfamily. In terms of assembly, homodimer. Zn(2+) serves as cofactor. Co(2+) is required as a cofactor.

The catalysed reaction is N-succinyl-(2S,6S)-2,6-diaminopimelate + H2O = (2S,6S)-2,6-diaminopimelate + succinate. It functions in the pathway amino-acid biosynthesis; L-lysine biosynthesis via DAP pathway; LL-2,6-diaminopimelate from (S)-tetrahydrodipicolinate (succinylase route): step 3/3. Catalyzes the hydrolysis of N-succinyl-L,L-diaminopimelic acid (SDAP), forming succinate and LL-2,6-diaminopimelate (DAP), an intermediate involved in the bacterial biosynthesis of lysine and meso-diaminopimelic acid, an essential component of bacterial cell walls. The chain is Succinyl-diaminopimelate desuccinylase from Campylobacter jejuni subsp. doylei (strain ATCC BAA-1458 / RM4099 / 269.97).